We begin with the raw amino-acid sequence, 713 residues long: Probable glutamate carboxypeptidase VP8 (713 aa).

The Cytoplasmic portion of the chain corresponds to 1 to 10 (MPHSVLARLP). Residues 11 to 31 (PGSVRLVAAFGLLLLVSLLVL) form a helical; Signal-anchor for type II membrane protein membrane-spanning segment. The Extracellular portion of the chain corresponds to 32-713 (HRRPGRPHVA…PTNFSSLVTP (682 aa)). Asparagine 66 and asparagine 311 each carry an N-linked (GlcNAc...) asparagine glycan. The tract at residues 245–539 (ATSGAERLKF…EIWGLLALRL (295 aa)) is catalytic. Residues histidine 345 and aspartate 355 each contribute to the Zn(2+) site. Glutamate 392 acts as the Nucleophile in catalysis. Residues glutamate 393, aspartate 421, and histidine 505 each coordinate Zn(2+). 2 N-linked (GlcNAc...) asparagine glycosylation sites follow: asparagine 667 and asparagine 706.

Belongs to the peptidase M28 family. M28B subfamily. It depends on Zn(2+) as a cofactor.

The protein resides in the cell membrane. The enzyme catalyses Release of an unsubstituted, C-terminal glutamyl residue, typically from Ac-Asp-Glu or folylpoly-gamma-glutamates.. Functionally, involved in the regulation of meristem development and seed maturation processes. Mediates regulation of embryonic regulatory genes and genes controlling abscisic acid (ABA) biosynthesis and turnover in developing seeds. May be required for the synthesis of small signaling molecules that integrates meristem and embryo formation in seeds. The polypeptide is Probable glutamate carboxypeptidase VP8 (Zea mays (Maize)).